The primary structure comprises 326 residues: ATP-dependent 6-phosphofructokinase (326 aa).

Gly-12 contacts ATP. Arg-22 to Lys-26 lines the ADP pocket. ATP contacts are provided by residues Arg-73–Phe-74 and Gly-103–Ser-106. Residue Asp-104 coordinates Mg(2+). Residue Thr-126–Asp-128 participates in substrate binding. The Proton acceptor role is filled by Asp-128. Arg-155 contacts ADP. Residues Arg-163 and Met-170–His-172 contribute to the substrate site. ADP contacts are provided by residues Gly-186–Glu-188, Lys-212, and Lys-215–Ser-217. Substrate is bound by residues Glu-224, Lys-246, and His-252–Arg-255.

The protein belongs to the phosphofructokinase type A (PFKA) family. ATP-dependent PFK group I subfamily. Prokaryotic clade 'B1' sub-subfamily. Homotetramer. It depends on Mg(2+) as a cofactor.

The protein resides in the cytoplasm. It catalyses the reaction beta-D-fructose 6-phosphate + ATP = beta-D-fructose 1,6-bisphosphate + ADP + H(+). It participates in carbohydrate degradation; glycolysis; D-glyceraldehyde 3-phosphate and glycerone phosphate from D-glucose: step 3/4. With respect to regulation, allosterically activated by ADP and other diphosphonucleosides, and allosterically inhibited by phosphoenolpyruvate. Functionally, catalyzes the phosphorylation of D-fructose 6-phosphate to fructose 1,6-bisphosphate by ATP, the first committing step of glycolysis. This Mycoplasmopsis pulmonis (strain UAB CTIP) (Mycoplasma pulmonis) protein is ATP-dependent 6-phosphofructokinase.